The sequence spans 305 residues: Tyrosine recombinase XerC (305 aa).

The Core-binding (CB) domain maps to 1 to 93 (MVLDGFAAYF…AWRQYCAWLV (93 aa)). In terms of domain architecture, Tyr recombinase spans 114–294 (RVPKALPQEW…DFDHIARLYD (181 aa)). Active-site residues include arginine 155, lysine 179, histidine 246, arginine 249, and histidine 272. The active-site O-(3'-phospho-DNA)-tyrosine intermediate is tyrosine 281.

Belongs to the 'phage' integrase family. XerC subfamily. Forms a cyclic heterotetrameric complex composed of two molecules of XerC and two molecules of XerD.

The protein localises to the cytoplasm. Functionally, site-specific tyrosine recombinase, which acts by catalyzing the cutting and rejoining of the recombining DNA molecules. The XerC-XerD complex is essential to convert dimers of the bacterial chromosome into monomers to permit their segregation at cell division. It also contributes to the segregational stability of plasmids. The protein is Tyrosine recombinase XerC of Neisseria gonorrhoeae (strain ATCC 700825 / FA 1090).